The sequence spans 186 residues: Lumazine protein (186 aa).

2 Lumazine-binding repeats span residues methionine 1–glycine 96 and glycine 97–tryptophan 186.

Requires 6,7-dimethyl-8-(1-D-ribityl)lumazine as cofactor.

Its function is as follows. Antenna protein that modulates the color of the bioluminescence emission of the luciferase. In the presence of LumP, luciferase emission is shifted to higher energy values (shorter wavelength). This Photobacterium leiognathi protein is Lumazine protein (lumP).